A 187-amino-acid chain; its full sequence is MSSSLPQHYRDILLELGENPEREGLLDTPKRASKAMQYLCHGYTQTVEEIVNGALFASDNDEMVIVQNIELYSLCEHHLLPFIGKAHVAYIPTGKVLGLSKIARIVDMFARRLQIQENLTKQIADSIQQVTGAAGVAVVIEAQHMCMMMRGVEKQNSTMNTSVMLGAFRESSTTRMEFLQLIGRSRT.

This sequence belongs to the GTP cyclohydrolase I family. Homomer.

The enzyme catalyses GTP + H2O = 7,8-dihydroneopterin 3'-triphosphate + formate + H(+). Its pathway is cofactor biosynthesis; 7,8-dihydroneopterin triphosphate biosynthesis; 7,8-dihydroneopterin triphosphate from GTP: step 1/1. This is GTP cyclohydrolase 1 1 from Pseudomonas syringae pv. tomato (strain ATCC BAA-871 / DC3000).